Here is a 156-residue protein sequence, read N- to C-terminus: MASEGIKVISDNRKAYHDYFVEEKLEAGVILTGTEIKSIRNGRVNLKDSYARIENGEVWLYQLHISPYEQGNRFNHDPLRKRKLLLNRSEIIKLVGKVQQQGLTLIPTKIYLKRGLAKIELGVCRGKKNYDKRQDIAERDAKREIERHFRDQGKGY.

The protein belongs to the SmpB family.

The protein resides in the cytoplasm. Required for rescue of stalled ribosomes mediated by trans-translation. Binds to transfer-messenger RNA (tmRNA), required for stable association of tmRNA with ribosomes. tmRNA and SmpB together mimic tRNA shape, replacing the anticodon stem-loop with SmpB. tmRNA is encoded by the ssrA gene; the 2 termini fold to resemble tRNA(Ala) and it encodes a 'tag peptide', a short internal open reading frame. During trans-translation Ala-aminoacylated tmRNA acts like a tRNA, entering the A-site of stalled ribosomes, displacing the stalled mRNA. The ribosome then switches to translate the ORF on the tmRNA; the nascent peptide is terminated with the 'tag peptide' encoded by the tmRNA and targeted for degradation. The ribosome is freed to recommence translation, which seems to be the essential function of trans-translation. This chain is SsrA-binding protein, found in Desulfitobacterium hafniense (strain DSM 10664 / DCB-2).